A 366-amino-acid polypeptide reads, in one-letter code: Phospho-N-acetylmuramoyl-pentapeptide-transferase (366 aa).

A run of 10 helical transmembrane segments spans residues 27–47 (AALF…INSL), 71–91 (TPTM…LLWA), 93–113 (LSNV…AIGF), 134–154 (LGIE…TALA), 174–194 (FLIN…VGAG), 205–225 (GLAI…AYLA), 245–265 (LAVV…FNAP), 268–288 (AIFM…TVAV), 294–314 (IVMA…IIQV), and 343–363 (QVVI…LSTL).

This sequence belongs to the glycosyltransferase 4 family. MraY subfamily. The cofactor is Mg(2+).

Its subcellular location is the cell inner membrane. The enzyme catalyses UDP-N-acetyl-alpha-D-muramoyl-L-alanyl-gamma-D-glutamyl-meso-2,6-diaminopimeloyl-D-alanyl-D-alanine + di-trans,octa-cis-undecaprenyl phosphate = di-trans,octa-cis-undecaprenyl diphospho-N-acetyl-alpha-D-muramoyl-L-alanyl-D-glutamyl-meso-2,6-diaminopimeloyl-D-alanyl-D-alanine + UMP. It functions in the pathway cell wall biogenesis; peptidoglycan biosynthesis. Its function is as follows. Catalyzes the initial step of the lipid cycle reactions in the biosynthesis of the cell wall peptidoglycan: transfers peptidoglycan precursor phospho-MurNAc-pentapeptide from UDP-MurNAc-pentapeptide onto the lipid carrier undecaprenyl phosphate, yielding undecaprenyl-pyrophosphoryl-MurNAc-pentapeptide, known as lipid I. The protein is Phospho-N-acetylmuramoyl-pentapeptide-transferase of Rhizobium etli (strain ATCC 51251 / DSM 11541 / JCM 21823 / NBRC 15573 / CFN 42).